The sequence spans 153 residues: MISQSTLFLFILLIIGLIAKNQSLTVAIGVLFLLKFTFLGDKVFPYLQTKGINLGVTVITIAVLVPIATGEIGFKQLGEAAKSYYAWIALASGVAVALLAKGGVQLLTTDPHITTALVFGTIIAVALFNGVAVGPLIGSGIAYAVMSIIQMFK.

4 consecutive transmembrane segments (helical) span residues 8–28 (FLFI…TVAI), 54–74 (LGVT…EIGF), 87–107 (WIAL…VQLL), and 117–137 (LVFG…GPLI).

It belongs to the UPF0756 family.

It localises to the cell membrane. The protein is UPF0756 membrane protein BCQ_4399 of Bacillus cereus (strain Q1).